Consider the following 264-residue polypeptide: Thymidylate synthase (264 aa).

R21 is a dUMP binding site. H51 contacts (6R)-5,10-methylene-5,6,7,8-tetrahydrofolate. 126–127 (RR) contacts dUMP. C146 (nucleophile) is an active-site residue. Residues 166-169 (RSAD), N177, and 207-209 (HLY) each bind dUMP. (6R)-5,10-methylene-5,6,7,8-tetrahydrofolate is bound at residue D169. A263 is a binding site for (6R)-5,10-methylene-5,6,7,8-tetrahydrofolate.

The protein belongs to the thymidylate synthase family. Bacterial-type ThyA subfamily. In terms of assembly, homodimer.

It is found in the cytoplasm. It catalyses the reaction dUMP + (6R)-5,10-methylene-5,6,7,8-tetrahydrofolate = 7,8-dihydrofolate + dTMP. It participates in pyrimidine metabolism; dTTP biosynthesis. Its function is as follows. Catalyzes the reductive methylation of 2'-deoxyuridine-5'-monophosphate (dUMP) to 2'-deoxythymidine-5'-monophosphate (dTMP) while utilizing 5,10-methylenetetrahydrofolate (mTHF) as the methyl donor and reductant in the reaction, yielding dihydrofolate (DHF) as a by-product. This enzymatic reaction provides an intracellular de novo source of dTMP, an essential precursor for DNA biosynthesis. This is Thymidylate synthase from Bartonella tribocorum (strain CIP 105476 / IBS 506).